We begin with the raw amino-acid sequence, 486 residues long: UDP-N-acetylmuramate--L-alanine ligase (486 aa).

129–135 contacts ATP; sequence GTHGKTT.

It belongs to the MurCDEF family.

The protein resides in the cytoplasm. It catalyses the reaction UDP-N-acetyl-alpha-D-muramate + L-alanine + ATP = UDP-N-acetyl-alpha-D-muramoyl-L-alanine + ADP + phosphate + H(+). The protein operates within cell wall biogenesis; peptidoglycan biosynthesis. Its function is as follows. Cell wall formation. The protein is UDP-N-acetylmuramate--L-alanine ligase of Vibrio cholerae serotype O1 (strain ATCC 39541 / Classical Ogawa 395 / O395).